A 215-amino-acid polypeptide reads, in one-letter code: Large ribosomal subunit protein uL1 (215 aa).

Belongs to the universal ribosomal protein uL1 family. As to quaternary structure, part of the 50S ribosomal subunit.

Functionally, binds directly to 23S rRNA. Probably involved in E site tRNA release. Its function is as follows. Protein L1 is also a translational repressor protein, it controls the translation of its operon by binding to its mRNA. The protein is Large ribosomal subunit protein uL1 of Cenarchaeum symbiosum (strain A).